The chain runs to 527 residues: Putative adhesin P1-like protein MPN_500 (527 aa).

4 disordered regions span residues 1–26, 76–148, 248–269, and 468–527; these read MDDI…GSRS, GWRN…LTNY, ASGS…PEQS, and FGTD…VSGH. The span at 9–26 shows a compositional bias: low complexity; it reads TSAGSSSGTSTNTSGSRS. Over residues 82–95 the composition is skewed to polar residues; the sequence is TTSGSTGNANDTKF. Low complexity predominate over residues 108 to 117; the sequence is SSGTNTSAGN. Positions 128 to 148 are enriched in polar residues; it reads QNGQVKTSVQEATSGDNLTNY. Low complexity predominate over residues 248–262; the sequence is ASGSGSNTTSSPGIG. Positions 468–495 are enriched in polar residues; the sequence is FGTDHSTQPQPQSLKTTTPVFGRSSGNL. Over residues 500–513 the composition is skewed to gly residues; that stretch reads SGGGAGGGSSGSGQ.

It belongs to the adhesin P1 family.

This chain is Putative adhesin P1-like protein MPN_500, found in Mycoplasma pneumoniae (strain ATCC 29342 / M129 / Subtype 1) (Mycoplasmoides pneumoniae).